We begin with the raw amino-acid sequence, 354 residues long: tRNA N6-adenosine threonylcarbamoyltransferase (354 aa).

Residues histidine 121, histidine 125, and tyrosine 142 each coordinate a divalent metal cation. Residues 142–146 (YVSGG), aspartate 174, glycine 189, glutamate 193, and asparagine 285 contribute to the substrate site. Aspartate 313 is an a divalent metal cation binding site.

It belongs to the KAE1 / TsaD family. As to quaternary structure, component of the EKC/KEOPS complex composed of at least bud32, cgi121, gon7, kae1 and pcc1; the whole complex dimerizes. It depends on a divalent metal cation as a cofactor.

It is found in the cytoplasm. The protein resides in the nucleus. The enzyme catalyses L-threonylcarbamoyladenylate + adenosine(37) in tRNA = N(6)-L-threonylcarbamoyladenosine(37) in tRNA + AMP + H(+). In terms of biological role, component of the EKC/KEOPS complex that is required for the formation of a threonylcarbamoyl group on adenosine at position 37 (t(6)A37) in tRNAs that read codons beginning with adenine. The complex is probably involved in the transfer of the threonylcarbamoyl moiety of threonylcarbamoyl-AMP (TC-AMP) to the N6 group of A37. Kae1 likely plays a direct catalytic role in this reaction, but requires other protein(s) of the complex to fulfill this activity. The EKC/KEOPS complex also promotes both telomere uncapping and telomere elongation. The complex is required for efficient recruitment of transcriptional coactivators. The protein is tRNA N6-adenosine threonylcarbamoyltransferase (gpe-1) of Neurospora crassa (strain ATCC 24698 / 74-OR23-1A / CBS 708.71 / DSM 1257 / FGSC 987).